Reading from the N-terminus, the 343-residue chain is UDP-3-O-acylglucosamine N-acyltransferase (343 aa).

The active-site Proton acceptor is the histidine 245.

The protein belongs to the transferase hexapeptide repeat family. LpxD subfamily. In terms of assembly, homotrimer.

It carries out the reaction a UDP-3-O-[(3R)-3-hydroxyacyl]-alpha-D-glucosamine + a (3R)-hydroxyacyl-[ACP] = a UDP-2-N,3-O-bis[(3R)-3-hydroxyacyl]-alpha-D-glucosamine + holo-[ACP] + H(+). Its pathway is bacterial outer membrane biogenesis; LPS lipid A biosynthesis. Its function is as follows. Catalyzes the N-acylation of UDP-3-O-acylglucosamine using 3-hydroxyacyl-ACP as the acyl donor. Is involved in the biosynthesis of lipid A, a phosphorylated glycolipid that anchors the lipopolysaccharide to the outer membrane of the cell. This chain is UDP-3-O-acylglucosamine N-acyltransferase, found in Phenylobacterium zucineum (strain HLK1).